The primary structure comprises 159 residues: Cyclic pyranopterin monophosphate synthase (159 aa).

Substrate is bound by residues 75–77 (LCH) and 113–114 (ME). Residue D128 is part of the active site.

This sequence belongs to the MoaC family. Homohexamer; trimer of dimers.

It carries out the reaction (8S)-3',8-cyclo-7,8-dihydroguanosine 5'-triphosphate = cyclic pyranopterin phosphate + diphosphate. Its pathway is cofactor biosynthesis; molybdopterin biosynthesis. Its function is as follows. Catalyzes the conversion of (8S)-3',8-cyclo-7,8-dihydroguanosine 5'-triphosphate to cyclic pyranopterin monophosphate (cPMP). This chain is Cyclic pyranopterin monophosphate synthase, found in Thiobacillus denitrificans (strain ATCC 25259 / T1).